The primary structure comprises 183 residues: MSESSIKIENVVASTKLAEEFDLTVIESEFEGAEYNKQKFPGLVYRVSDPKAAFLVFTSGKVVCTGAKNVADVHTVIGNMAKKLNSIGIKTMENPQITVQNIVASADLHTILNLNAIAIGLGLENIEYEPEQFPGLVYRIDEPKVVVLIFSSGKLVVTGGKSPEDCERGVEVVRQQLDNMGLL.

2 tandem repeats follow at residues 8-84 (IENV…AKKL) and 99-177 (VQNI…RQQL).

It belongs to the TBP family.

Its function is as follows. General factor that plays a role in the activation of archaeal genes transcribed by RNA polymerase. Binds specifically to the TATA box promoter element which lies close to the position of transcription initiation. The polypeptide is TATA-box-binding protein 1 (Methanosarcina acetivorans (strain ATCC 35395 / DSM 2834 / JCM 12185 / C2A)).